Reading from the N-terminus, the 364-residue chain is MGSISAIHHIEFIVSNALQSAYWYCSGFGFEKFAEKITDESTSIALRNGTARVIITSYNSQNIYTDQLIKHGDFIKDVSFRVDNLDAVLQNLVENDIKVIQQSEVSTKDGLVRTATLLSEGGDVTHTLFELGEFKGNFLPFFTPISNFELFENIEKMPAILMDHVVQNYPIGEMEAAADWYFKTMRLKRFWSVDDKVATSEFSAMTAWLLVNDDHTVQVTLAEGVKGRKGKSQIEEFINYHGGSGVQHFALLVEDIISAVQIMKSRSVEFLTIPSQYYDNLEERLSKTNLIVKEDLKMIRELNILMDFDENGYLLQIFSKPLQDRPTLFIEIIQRANFKGFGAGNFKALFDAVEREQEKRGTLF.

2 VOC domains span residues 6 to 134 and 161 to 320; these read AIHH…LGEF and LMDH…IFSK. 3 residues coordinate Fe cation: H164, H248, and E331.

The protein belongs to the 4HPPD family. It depends on Fe cation as a cofactor.

The polypeptide is Putative protein C31H2.4 (Caenorhabditis elegans).